Here is a 529-residue protein sequence, read N- to C-terminus: Peptide chain release factor 3 (529 aa).

The tr-type G domain occupies 11–280 (SKRRTFAIIS…GLTDWAPAPL (270 aa)). GTP contacts are provided by residues 20-27 (SHPDAGKT), 88-92 (DTPGH), and 142-145 (NKLD).

This sequence belongs to the TRAFAC class translation factor GTPase superfamily. Classic translation factor GTPase family. PrfC subfamily.

It is found in the cytoplasm. Its function is as follows. Increases the formation of ribosomal termination complexes and stimulates activities of RF-1 and RF-2. It binds guanine nucleotides and has strong preference for UGA stop codons. It may interact directly with the ribosome. The stimulation of RF-1 and RF-2 is significantly reduced by GTP and GDP, but not by GMP. The sequence is that of Peptide chain release factor 3 from Vibrio vulnificus (strain CMCP6).